The chain runs to 348 residues: E3 ubiquitin-protein ligase MARCHF9 (348 aa).

A disordered region spans residues 48–96; it reads ARDGDGDEEEYYGSEPRARGLAGDKEPRAGPPPPPAPPPPPPGALDALS. Positions 63-75 are enriched in basic and acidic residues; sequence PRARGLAGDKEPR. Residues 76-90 are compositionally biased toward pro residues; sequence AGPPPPPAPPPPPPG. The RING-CH-type zinc finger occupies 102 to 162; it reads DSGLRTPQCR…ELCYFKYQVL (61 aa). Cysteine 110, cysteine 113, cysteine 126, cysteine 128, histidine 136, cysteine 139, cysteine 152, and cysteine 155 together coordinate Zn(2+). 2 consecutive transmembrane segments (helical) span residues 185-205 and 219-239; these read IAAI…LIWS and LFQI…GLIV. 2 disordered regions span residues 272 to 304 and 328 to 348; these read GDTG…AAQR and PPDA…VTTV.

Homodimer.

It is found in the golgi apparatus membrane. Its subcellular location is the lysosome membrane. The catalysed reaction is S-ubiquitinyl-[E2 ubiquitin-conjugating enzyme]-L-cysteine + [acceptor protein]-L-lysine = [E2 ubiquitin-conjugating enzyme]-L-cysteine + N(6)-ubiquitinyl-[acceptor protein]-L-lysine.. The protein operates within protein modification; protein ubiquitination. Its function is as follows. E3 ubiquitin-protein ligase that may mediate ubiquitination of MHC-I, CD4 and ICAM1, and promote their subsequent endocytosis and sorting to lysosomes via multivesicular bodies. E3 ubiquitin ligases accept ubiquitin from an E2 ubiquitin-conjugating enzyme in the form of a thioester and then directly transfer the ubiquitin to targeted substrates. The polypeptide is E3 ubiquitin-protein ligase MARCHF9 (Marchf9) (Mus musculus (Mouse)).